Here is a 102-residue protein sequence, read N- to C-terminus: Chorion protein S15 (102 aa).

A signal peptide spans methionine 1–alanine 18.

The protein belongs to the chorion protein S15/S18 family.

It localises to the secreted. Functionally, chorion membrane (egg shell) protein; plays a role in protecting the egg from the environment. The protein is Chorion protein S15 (Cp15) of Drosophila grimshawi (Hawaiian fruit fly).